A 210-amino-acid polypeptide reads, in one-letter code: Glutathione S-transferase 4 (210 aa).

The GST N-terminal domain maps to 1–80; that stretch reads MDFYYLPLSA…YLVEKYGKQD (80 aa). Glutathione-binding positions include serine 9, 50-52, and 64-66; these read HTI and ESR. The GST C-terminal domain maps to 87–208; the sequence is CPKKRALINQ…AGALEMKTLI (122 aa).

The protein belongs to the GST superfamily. Theta family. In terms of assembly, homodimer.

The catalysed reaction is RX + glutathione = an S-substituted glutathione + a halide anion + H(+). Conjugation of reduced glutathione to a wide number of exogenous and endogenous hydrophobic electrophiles. The sequence is that of Glutathione S-transferase 4 (Gst4) from Musca domestica (House fly).